Reading from the N-terminus, the 420-residue chain is Glycerol-3-phosphate dehydrogenase [NAD(+)] 2, chloroplastic (420 aa).

Residues 1–45 constitute a chloroplast transit peptide; the sequence is MAASVQPACLDLHFSGKHPPLLKHNAIIVRCVSSPNVIPEADSIS. NAD(+)-binding positions include 94 to 99, phenylalanine 171, lysine 194, and alanine 228; that span reads GGGSFG. Lysine 194 provides a ligand contact to substrate. Lysine 279 (proton acceptor) is an active-site residue. NAD(+)-binding residues include arginine 343 and glutamate 369. 343-344 serves as a coordination point for substrate; sequence RN.

Belongs to the NAD-dependent glycerol-3-phosphate dehydrogenase family.

The protein localises to the plastid. It is found in the chloroplast. It carries out the reaction sn-glycerol 3-phosphate + NAD(+) = dihydroxyacetone phosphate + NADH + H(+). The protein operates within membrane lipid metabolism; glycerophospholipid metabolism. Functionally, required to supply glycerol-3-phosphate in the chloroplast for the synthesis of glycerolipids. Required for activation of systemic acquired resistance (SAR). Provision of glycerol-3-phosphate may be involved in generating lipid signals necessary for mediating defense responses and SAR. This is Glycerol-3-phosphate dehydrogenase [NAD(+)] 2, chloroplastic (GLY1) from Arabidopsis thaliana (Mouse-ear cress).